The primary structure comprises 351 residues: UDP-3-O-acylglucosamine N-acyltransferase (351 aa).

The Proton acceptor role is filled by histidine 240.

It belongs to the transferase hexapeptide repeat family. LpxD subfamily. As to quaternary structure, homotrimer.

It carries out the reaction a UDP-3-O-[(3R)-3-hydroxyacyl]-alpha-D-glucosamine + a (3R)-hydroxyacyl-[ACP] = a UDP-2-N,3-O-bis[(3R)-3-hydroxyacyl]-alpha-D-glucosamine + holo-[ACP] + H(+). The protein operates within bacterial outer membrane biogenesis; LPS lipid A biosynthesis. Functionally, catalyzes the N-acylation of UDP-3-O-acylglucosamine using 3-hydroxyacyl-ACP as the acyl donor. Is involved in the biosynthesis of lipid A, a phosphorylated glycolipid that anchors the lipopolysaccharide to the outer membrane of the cell. The protein is UDP-3-O-acylglucosamine N-acyltransferase of Pseudomonas fluorescens (strain Pf0-1).